The primary structure comprises 97 residues: MTQKNGADRPDDYKRFSSLDKEYDFQQSIRSNTETESVNTETQTHNKENKNDTTDVAGKYFEPSDYKGSTQLEKGLAETHEQVSDDYFEGTIDQNLD.

Residues 1 to 24 (MTQKNGADRPDDYKRFSSLDKEYD) are compositionally biased toward basic and acidic residues. The tract at residues 1–97 (MTQKNGADRP…FEGTIDQNLD (97 aa)) is disordered. Residues 31–43 (SNTETESVNTETQ) are compositionally biased toward low complexity. Residues 44 to 53 (THNKENKNDT) are compositionally biased toward basic and acidic residues.

This is an uncharacterized protein from Bacillus subtilis (strain 168).